The primary structure comprises 482 residues: MKFIIKLFPEITIKSQSVRLRFIKILTGNIRNVLKHYDETLAVVRHWDNIEVRAKDENQRLAIRDALTRIPGIHHILEVEDVPFTDMHDIFEKALVQYRDQLEGKTFCVRVKRRGKHDFSSIDVERYVGGGLNQHIESARVKLTNPEVTVHLEVEDDRLLLIKGRYEGIGGFPIGTQEDVLSLISGGFDSGVSSYMLMRRGCRVHYCFFNLGGAAHEIGVRQVAHYLWNRFGSSHRVRFVAINFEPVVGEILEKIDDGQMGVILKRMMVRAASKVAERYGVQALVTGEALGQVSSQTLTNLRLIDNVSDTLILRPLISYDKEHIINLARQIGTEDFARTMPEYCGVISKSPTVKAVKSKIEAEEEKFDFSILDKVVEEANNVDIREIAQQTEQEVVEVETVNGFGPNDVILDIRSIDEQEDKPLKVEGIDVVSLPFYKLSTKFGDLDQNKTWLLWCERGVMSRLQALYLREQGFNNVKVYRP.

The 105-residue stretch at 61 to 165 folds into the THUMP domain; the sequence is LAIRDALTRI…DDRLLLIKGR (105 aa). Residues 183–184, K265, G287, and Q296 each bind ATP; that span reads LI. A disulfide bridge links C344 with C456. A Rhodanese domain is found at 404-482; the sequence is FGPNDVILDI…GFNNVKVYRP (79 aa). C456 acts as the Cysteine persulfide intermediate in catalysis.

Belongs to the ThiI family.

Its subcellular location is the cytoplasm. It catalyses the reaction [ThiI sulfur-carrier protein]-S-sulfanyl-L-cysteine + a uridine in tRNA + 2 reduced [2Fe-2S]-[ferredoxin] + ATP + H(+) = [ThiI sulfur-carrier protein]-L-cysteine + a 4-thiouridine in tRNA + 2 oxidized [2Fe-2S]-[ferredoxin] + AMP + diphosphate. It carries out the reaction [ThiS sulfur-carrier protein]-C-terminal Gly-Gly-AMP + S-sulfanyl-L-cysteinyl-[cysteine desulfurase] + AH2 = [ThiS sulfur-carrier protein]-C-terminal-Gly-aminoethanethioate + L-cysteinyl-[cysteine desulfurase] + A + AMP + 2 H(+). It functions in the pathway cofactor biosynthesis; thiamine diphosphate biosynthesis. Functionally, catalyzes the ATP-dependent transfer of a sulfur to tRNA to produce 4-thiouridine in position 8 of tRNAs, which functions as a near-UV photosensor. Also catalyzes the transfer of sulfur to the sulfur carrier protein ThiS, forming ThiS-thiocarboxylate. This is a step in the synthesis of thiazole, in the thiamine biosynthesis pathway. The sulfur is donated as persulfide by IscS. The sequence is that of tRNA sulfurtransferase from Escherichia coli (strain ATCC 8739 / DSM 1576 / NBRC 3972 / NCIMB 8545 / WDCM 00012 / Crooks).